Consider the following 407-residue polypeptide: Serine/threonine transporter SstT (407 aa).

A run of 9 helical transmembrane segments spans residues 11–31 (IIHG…VILA), 43–63 (FLGD…VFVL), 82–102 (IISL…LLSF), 141–161 (ALMT…GIAL), 192–212 (LGIF…ALAG), 216–236 (LLMV…PLIV), 298–318 (MGGA…TLGV), 339–359 (ASGV…LFGI), and 363–383 (IAMQ…SAET).

It belongs to the dicarboxylate/amino acid:cation symporter (DAACS) (TC 2.A.23) family.

It is found in the cell inner membrane. The enzyme catalyses L-serine(in) + Na(+)(in) = L-serine(out) + Na(+)(out). The catalysed reaction is L-threonine(in) + Na(+)(in) = L-threonine(out) + Na(+)(out). Its function is as follows. Involved in the import of serine and threonine into the cell, with the concomitant import of sodium (symport system). This Shewanella denitrificans (strain OS217 / ATCC BAA-1090 / DSM 15013) protein is Serine/threonine transporter SstT.